A 136-amino-acid polypeptide reads, in one-letter code: Pleckstrin homology-like domain family A member 2 (136 aa).

A PH domain is found at 12-105 (ILKEGDLEKR…WNAEITLALV (94 aa)).

This sequence belongs to the PHLDA2 family.

It localises to the cytoplasm. It is found in the membrane. Functionally, plays a role in regulating placenta growth. May act via its PH domain that competes with other PH domain-containing proteins, thereby preventing their binding to membrane lipids. The sequence is that of Pleckstrin homology-like domain family A member 2 (phlda2) from Xenopus tropicalis (Western clawed frog).